Here is a 344-residue protein sequence, read N- to C-terminus: Protein RecA (344 aa).

65–72 contributes to the ATP binding site; sequence GPESSGKT.

The protein belongs to the RecA family.

The protein resides in the cytoplasm. Its function is as follows. Can catalyze the hydrolysis of ATP in the presence of single-stranded DNA, the ATP-dependent uptake of single-stranded DNA by duplex DNA, and the ATP-dependent hybridization of homologous single-stranded DNAs. It interacts with LexA causing its activation and leading to its autocatalytic cleavage. The protein is Protein RecA of Xanthomonas oryzae pv. oryzae (strain PXO99A).